The primary structure comprises 377 residues: Palmitoyltransferase ZDHHC16 (377 aa).

The Cytoplasmic portion of the chain corresponds to 1 to 77; it reads MRGQRSLLLG…VYWLVDNVIR (77 aa). Residues 78 to 98 traverse the membrane as a helical segment; that stretch reads WFGVVFVVLVIVLTGSIVAIA. The Lumenal segment spans residues 99 to 116; it reads YLCVLPLILRTYSVPRLC. Residues 117-137 traverse the membrane as a helical segment; sequence WHFFYSHWNLILIVFHYYQAI. Residues 138–198 are Cytoplasmic-facing; it reads TTPPGYPPQG…NNCVGHYNHR (61 aa). One can recognise a DHHC domain in the interval 155–205; sequence SICKKCIYPKPARTHHCSICNRCVLKMDHHCPWLNNCVGHYNHRYFFSFCF. Residue Cys-185 is the S-palmitoyl cysteine intermediate of the active site. The helical transmembrane segment at 199 to 219 threads the bilayer; sequence YFFSFCFFMTLGCVYCSYGSW. At 220–266 the chain is on the lumenal side; that stretch reads DLFREAYAAIEKMKQLDKNKLQAVANQTYHQTPPPTFSFRERMTHKS. The chain crosses the membrane as a helical span at residues 267 to 287; it reads LVYLWFLCSSVALALGALTVW. Over 288-377 the chain is Cytoplasmic; sequence HAVLISRGET…TAHSASVMAV (90 aa).

It belongs to the DHHC palmitoyltransferase family. As to quaternary structure, interacts with ABL1. Interacts with COPS5/JAB1. In terms of tissue distribution, widely expressed.

It localises to the endoplasmic reticulum membrane. The catalysed reaction is L-cysteinyl-[protein] + hexadecanoyl-CoA = S-hexadecanoyl-L-cysteinyl-[protein] + CoA. Palmitoyl acyltransferase that mediates palmitoylation of proteins such as PLN and ZDHHC6. Required during embryonic heart development and cardiac function, possibly by mediating palmitoylation of PLN, thereby affecting PLN phosphorylation and homooligomerization. Also required for eye development. Palmitoylates ZDHHC6, affecting the quaternary assembly of ZDHHC6, its localization, stability and function. May play a role in DNA damage response. May be involved in apoptosis regulation. Involved in the proliferation of neural stem cells by regulating the FGF/ERK pathway. This chain is Palmitoyltransferase ZDHHC16, found in Homo sapiens (Human).